The sequence spans 271 residues: Fatty acid elongase 2 (271 aa).

A helical membrane pass occupies residues W16–W36. The N-linked (GlcNAc...) asparagine glycan is linked to N52. The next 2 membrane-spanning stretches (helical) occupy residues V59 to V79 and F110 to V130. Residues H140–H144 carry the HxxHH motif motif. The Nucleophile role is filled by H143. Helical transmembrane passes span I162 to M182, I194 to M214, and G241 to L261.

The protein belongs to the ELO family.

It localises to the endoplasmic reticulum membrane. The catalysed reaction is an acyl-CoA + malonyl-CoA + H(+) = a 3-oxoacyl-CoA + CO2 + CoA. It participates in lipid metabolism; fatty acid biosynthesis. In terms of biological role, involved in the synthesis of fatty acids. Elongates C10 fatty acids to C14. In Trypanosoma brucei brucei (strain 927/4 GUTat10.1), this protein is Fatty acid elongase 2.